We begin with the raw amino-acid sequence, 429 residues long: UDP-N-acetylglucosamine 1-carboxyvinyltransferase (429 aa).

K22–N23 provides a ligand contact to phosphoenolpyruvate. A UDP-N-acetyl-alpha-D-glucosamine-binding site is contributed by R102. C126 serves as the catalytic Proton donor. C126 bears the 2-(S-cysteinyl)pyruvic acid O-phosphothioketal mark. Residues R131 to L135, K171 to V174, D316, and I338 each bind UDP-N-acetyl-alpha-D-glucosamine.

This sequence belongs to the EPSP synthase family. MurA subfamily.

Its subcellular location is the cytoplasm. The enzyme catalyses phosphoenolpyruvate + UDP-N-acetyl-alpha-D-glucosamine = UDP-N-acetyl-3-O-(1-carboxyvinyl)-alpha-D-glucosamine + phosphate. It functions in the pathway cell wall biogenesis; peptidoglycan biosynthesis. In terms of biological role, cell wall formation. Adds enolpyruvyl to UDP-N-acetylglucosamine. This chain is UDP-N-acetylglucosamine 1-carboxyvinyltransferase, found in Chelativorans sp. (strain BNC1).